We begin with the raw amino-acid sequence, 312 residues long: Putative endonuclease 4 (312 aa).

Zn(2+)-binding residues include His-84, His-127, Glu-166, Asp-202, His-205, His-239, Asp-252, His-254, and Glu-284.

It belongs to the AP endonuclease 2 family. It depends on Zn(2+) as a cofactor.

It catalyses the reaction Endonucleolytic cleavage to 5'-phosphooligonucleotide end-products.. In terms of biological role, endonuclease IV plays a role in DNA repair. It cleaves phosphodiester bonds at apurinic or apyrimidinic sites (AP sites) to produce new 5'-ends that are base-free deoxyribose 5-phosphate residues. This chain is Putative endonuclease 4, found in Acanthamoeba polyphaga (Amoeba).